A 274-amino-acid polypeptide reads, in one-letter code: Ribosomal RNA small subunit methyltransferase A (274 aa).

Residues asparagine 28, leucine 30, glycine 55, glutamate 77, aspartate 103, and asparagine 122 each coordinate S-adenosyl-L-methionine.

Belongs to the class I-like SAM-binding methyltransferase superfamily. rRNA adenine N(6)-methyltransferase family. RsmA subfamily.

The protein localises to the cytoplasm. The catalysed reaction is adenosine(1518)/adenosine(1519) in 16S rRNA + 4 S-adenosyl-L-methionine = N(6)-dimethyladenosine(1518)/N(6)-dimethyladenosine(1519) in 16S rRNA + 4 S-adenosyl-L-homocysteine + 4 H(+). Functionally, specifically dimethylates two adjacent adenosines (A1518 and A1519) in the loop of a conserved hairpin near the 3'-end of 16S rRNA in the 30S particle. May play a critical role in biogenesis of 30S subunits. The sequence is that of Ribosomal RNA small subunit methyltransferase A from Sinorhizobium medicae (strain WSM419) (Ensifer medicae).